The chain runs to 160 residues: Endoplasmic reticulum transmembrane protein 2 (160 aa).

The Lumenal portion of the chain corresponds to 1–2 (MG). A helical membrane pass occupies residues 3–23 (VYLAVLFSLLVIEMAILFILV). Over 24–45 (LPLPQRMRRWLYIRYSIISTNK) the chain is Cytoplasmic. Residues 46–66 (KFRTYMVGIMIFVGLLFIDSW) traverse the membrane as a helical segment. The Lumenal portion of the chain corresponds to 67-103 (KRSQIRVSTYRNQKNPYIINSVTPVDALASRAYNQRN). A helical membrane pass occupies residues 104 to 124 (VYISGFIIYFYICILTVMSIL). Topologically, residues 125 to 160 (RRIVEWNDKMKAGDDILKEKLRRKQKYLEELQKKKF) are cytoplasmic. The short motif at 157 to 160 (KKKF) is the Di-lysine motif element.

This sequence belongs to the BCAP29/BCAP31 family.

It localises to the endoplasmic reticulum membrane. Its function is as follows. May play a role in anterograde transport of membrane proteins from the endoplasmic reticulum to the Golgi. This is Endoplasmic reticulum transmembrane protein 2 (YET2) from Saccharomyces cerevisiae (strain ATCC 204508 / S288c) (Baker's yeast).